The primary structure comprises 292 residues: 4-amino-L-phenylalanine/4-methylamino-L-phenylalanine methyltransferase (292 aa).

128-132 contributes to the S-adenosyl-L-methionine binding site; that stretch reads CAGPG.

This sequence belongs to the protein N5-glutamine methyltransferase family.

The enzyme catalyses 4-amino-L-phenylalanine + S-adenosyl-L-methionine = 4-methylamino-L-phenylalanine + S-adenosyl-L-homocysteine + H(+). It catalyses the reaction 4-methylamino-L-phenylalanine + S-adenosyl-L-methionine = 4-dimethylamino-L-phenylalanine + S-adenosyl-L-homocysteine + H(+). It functions in the pathway antibiotic biosynthesis. Its function is as follows. Involved in pristinamycin I biosynthesis. Catalyzes the SAM-dependent methylation of 4-amino-L-phenylalanine (PAPA) to 4-methylamino-L-phenylalanine (MMPAPA), and of MMPAPA to 4-dimethylamino-L-phenylalanine (DMPAPA). The sequence is that of 4-amino-L-phenylalanine/4-methylamino-L-phenylalanine methyltransferase from Streptomyces pristinaespiralis.